The sequence spans 826 residues: Lon protease (826 aa).

The 196-residue stretch at 26 to 221 (LPMLPVRDVV…AVNGFVSREV (196 aa)) folds into the Lon N-terminal domain. Residue 373-380 (GPPGVGKT) coordinates ATP. A Lon proteolytic domain is found at 609-790 (EPQIGLATGL…NEVLEKALLP (182 aa)). Residues S696 and K739 contribute to the active site. The interval 788 to 826 (LLPAEKKKAPPKKKPPKKAAKPKAKKTQPKAKTTEAADK) is disordered. Residues 796 to 816 (APPKKKPPKKAAKPKAKKTQP) are compositionally biased toward basic residues.

Belongs to the peptidase S16 family. Homohexamer. Organized in a ring with a central cavity.

It is found in the cytoplasm. It carries out the reaction Hydrolysis of proteins in presence of ATP.. In terms of biological role, ATP-dependent serine protease that mediates the selective degradation of mutant and abnormal proteins as well as certain short-lived regulatory proteins. Required for cellular homeostasis and for survival from DNA damage and developmental changes induced by stress. Degrades polypeptides processively to yield small peptide fragments that are 5 to 10 amino acids long. Binds to DNA in a double-stranded, site-specific manner. This is Lon protease from Desulfatibacillum aliphaticivorans.